Reading from the N-terminus, the 280-residue chain is Probable 6-phosphogluconolactonase 2 (280 aa).

It belongs to the glucosamine/galactosamine-6-phosphate isomerase family. 6-phosphogluconolactonase subfamily.

It carries out the reaction 6-phospho-D-glucono-1,5-lactone + H2O = 6-phospho-D-gluconate + H(+). Its pathway is carbohydrate degradation; pentose phosphate pathway; D-ribulose 5-phosphate from D-glucose 6-phosphate (oxidative stage): step 2/3. Its function is as follows. Hydrolysis of 6-phosphogluconolactone to 6-phosphogluconate. The chain is Probable 6-phosphogluconolactonase 2 from Oryza sativa subsp. indica (Rice).